A 136-amino-acid polypeptide reads, in one-letter code: Histone H3.1/H3.2 (136 aa).

The segment at 1 to 42 (MARTKQTARKSTGGKAPRKQLASKAARKAAPATGGVKKPHRY) is disordered. N6,N6,N6-trimethyllysine; alternate is present on Lys5. N6,N6-dimethyllysine; alternate is present on Lys5. N6-methyllysine; alternate is present on residues Lys5 and Lys10. Lys10 bears the N6-acetyllysine; alternate mark. A Phosphoserine modification is found at Ser11. The residue at position 15 (Lys15) is an N6,N6-dimethyllysine; alternate. Lys15, Lys19, Lys24, Lys28, and Lys37 each carry N6-acetyllysine; alternate. Residues Lys19, Lys24, Lys28, and Lys37 each carry the N6-methyllysine; alternate modification. The span at 19-32 (KQLASKAARKAAPA) shows a compositional bias: low complexity. N6,N6,N6-trimethyllysine; alternate occurs at positions 28 and 37. N6,N6-dimethyllysine; alternate is present on residues Lys28 and Lys37. 2 positions are modified to N6-acetyllysine: Lys57 and Lys65. Residue Lys80 is modified to N6,N6,N6-trimethyllysine; alternate. N6,N6-dimethyllysine; alternate is present on Lys80. Lys80 is modified (N6-methyllysine; alternate).

This sequence belongs to the histone H3 family. The nucleosome is a histone octamer containing two molecules each of H2A, H2B, H3 and H4 assembled in one H3-H4 heterotetramer and two H2A-H2B heterodimers. The octamer wraps approximately 147 bp of DNA. In terms of processing, phosphorylated by ark1 to form H3S10ph in a cell cycle-dependent manner during mitosis and meiosis. H3S10ph is also formed by ssp2, promotes subsequent H3K14ac formation by gcn5, and is required for transcriptional activation through TBP recruitment to the promoters. Dephosphorylation is performed by sds21. Mono-, di- and trimethylated by the COMPASS complex to form H3K4me1/2/3. H3K4me activates gene expression by regulating transcription elongation and plays a role in telomere length maintenance. H3K4me enrichment correlates with transcription levels, and occurs in a 5' to 3' gradient with H3K4me3 enrichment at the 5'-end of genes, shifting to H3K4me2 and then H3K4me1. Methylated by clr4 to form H3K9me1. H3K9me1 represents a specific tag for epigenetic transcriptional repression by recruiting swi6/HP1 to methylated histones. Targeting to histone probably involves clr3 and rik1. Essential for silencing of centromeres and directional switching of the mating type. Methylated by set2 to form H3K36me. H3K36me represses gene expression. Methylated by dot1 to form H3K79me. H3K79me is required for association of SIR proteins with telomeric regions and for telomeric silencing. The COMPASS-mediated formation of H3K4me2/3 and the dot1-mediated formation of H3K79me require H2BK123ub1. Post-translationally, acetylation of histone H3 leads to transcriptional activation. H3K14ac formation by gcn5 is promoted by H3S10ph. H3K14ac can also be formed by esa1. H3K56ac formation occurs predominantly in newly synthesized H3 molecules during G1, S and G2/M of the cell cycle and may be involved in DNA repair.

The protein localises to the nucleus. Its subcellular location is the chromosome. Its function is as follows. Core component of nucleosome. Nucleosomes wrap and compact DNA into chromatin, limiting DNA accessibility to the cellular machineries which require DNA as a template. Histones thereby play a central role in transcription regulation, DNA repair, DNA replication and chromosomal stability. DNA accessibility is regulated via a complex set of post-translational modifications of histones, also called histone code, and nucleosome remodeling. The chain is Histone H3.1/H3.2 (hht1) from Schizosaccharomyces pombe (strain 972 / ATCC 24843) (Fission yeast).